The chain runs to 109 residues: Large ribosomal subunit protein uL23 (109 aa).

Belongs to the universal ribosomal protein uL23 family. In terms of assembly, part of the 50S ribosomal subunit. Contacts protein L29, and trigger factor when it is bound to the ribosome.

Functionally, one of the early assembly proteins it binds 23S rRNA. One of the proteins that surrounds the polypeptide exit tunnel on the outside of the ribosome. Forms the main docking site for trigger factor binding to the ribosome. This chain is Large ribosomal subunit protein uL23, found in Chlorobium phaeobacteroides (strain BS1).